Consider the following 101-residue polypeptide: Small ribosomal subunit protein uS14 (101 aa).

It belongs to the universal ribosomal protein uS14 family. Part of the 30S ribosomal subunit. Contacts proteins S3 and S10.

Its function is as follows. Binds 16S rRNA, required for the assembly of 30S particles and may also be responsible for determining the conformation of the 16S rRNA at the A site. The chain is Small ribosomal subunit protein uS14 from Chromobacterium violaceum (strain ATCC 12472 / DSM 30191 / JCM 1249 / CCUG 213 / NBRC 12614 / NCIMB 9131 / NCTC 9757 / MK).